Here is a 231-residue protein sequence, read N- to C-terminus: CD302 antigen (231 aa).

The signal sequence occupies residues 1-21; sequence MSAAVVATLPTLLLLLGLAAA. Residues 22-169 lie on the Extracellular side of the membrane; sequence DCPSSSWVQF…YEKKYLPDHH (148 aa). Positions 31–153 constitute a C-type lectin domain; sequence FQSNCYIFLQ…CEVSSVEGAL (123 aa). Asn-110 carries an N-linked (GlcNAc...) asparagine glycan. Cys-129 and Cys-144 are joined by a disulfide. Residues 170-190 traverse the membrane as a helical segment; the sequence is ILITALVIASTTILTITGAVV. The Cytoplasmic portion of the chain corresponds to 191–231; sequence WFLYKRNLTSGLTNTAYTTAPQLPYNDDCILVDAEENEYVA.

The protein resides in the membrane. The protein localises to the cell projection. It localises to the filopodium. It is found in the cytoplasm. Its subcellular location is the cell cortex. The protein resides in the microvillus. Functionally, potential multifunctional C-type lectin receptor that may play roles in endocytosis and phagocytosis as well as in cell adhesion and migration. This chain is CD302 antigen, found in Trichosurus vulpecula (Brush-tailed possum).